The primary structure comprises 144 residues: Transcription antitermination protein NusB (144 aa).

The protein belongs to the NusB family.

Its function is as follows. Involved in transcription antitermination. Required for transcription of ribosomal RNA (rRNA) genes. Binds specifically to the boxA antiterminator sequence of the ribosomal RNA (rrn) operons. The polypeptide is Transcription antitermination protein NusB (Haemophilus influenzae (strain PittEE)).